The chain runs to 310 residues: MFDPKKFIDEAVEEIKQQISDRKAIIALSGGVDSSVAAVLTHKAIGDKLTAVFVDTGLMRKGEREEVEKTFRDKLGLNLIVVDAKDRFLNALKGVTDPEEKRKIIGKLFIDVFEEIAEDIKAEVLVQGTIAPDWIETQGKIKSHHNVALPHGMVLEVVEPLRELYKDEVRLLAKELGLPDSIVYRQPFPGPGLAVRVLGEVTEEKLNICREANAIVEEEVKKANLDKDLWQYFAVVLDCKATGVKGDEREYNWIVALRMVKSLDAMTAHVPEIPFDLLKRISKRITSEIPNVARVVFDITDKPPATIEFE.

The GMPS ATP-PPase domain occupies 2–185; the sequence is FDPKKFIDEA…LGLPDSIVYR (184 aa). Residue 29-35 coordinates ATP; it reads SGGVDSS.

As to quaternary structure, heterodimer composed of a glutamine amidotransferase subunit (A) and a GMP-binding subunit (B).

The enzyme catalyses XMP + L-glutamine + ATP + H2O = GMP + L-glutamate + AMP + diphosphate + 2 H(+). Its pathway is purine metabolism; GMP biosynthesis; GMP from XMP (L-Gln route): step 1/1. Its function is as follows. Catalyzes the synthesis of GMP from XMP. This Methanocaldococcus jannaschii (strain ATCC 43067 / DSM 2661 / JAL-1 / JCM 10045 / NBRC 100440) (Methanococcus jannaschii) protein is GMP synthase [glutamine-hydrolyzing] subunit B (guaAB).